Consider the following 197-residue polypeptide: Molybdenum cofactor guanylyltransferase (197 aa).

GTP is bound by residues 10–12, Lys-23, Asn-51, Asp-69, and Asp-99; that span reads LAG. Mg(2+) is bound at residue Asp-99.

The protein belongs to the MobA family. In terms of assembly, monomer. Mg(2+) is required as a cofactor.

It is found in the cytoplasm. The catalysed reaction is Mo-molybdopterin + GTP + H(+) = Mo-molybdopterin guanine dinucleotide + diphosphate. Its function is as follows. Transfers a GMP moiety from GTP to Mo-molybdopterin (Mo-MPT) cofactor (Moco or molybdenum cofactor) to form Mo-molybdopterin guanine dinucleotide (Mo-MGD) cofactor. This Shewanella sp. (strain ANA-3) protein is Molybdenum cofactor guanylyltransferase.